The chain runs to 276 residues: Transport and Golgi organization protein 2 homolog (276 aa).

This sequence belongs to the Tango2 family.

It is found in the cytoplasm. It localises to the mitochondrion. The protein resides in the golgi apparatus. Functionally, may be involved in lipid homeostasis. The polypeptide is Transport and Golgi organization protein 2 homolog (TANGO2) (Homo sapiens (Human)).